A 285-amino-acid chain; its full sequence is Neuralized-like protein 2 (285 aa).

The tract at residues 1 to 28 (MADPSEHVGLGGPRSPARPEPPPTRFHQ) is disordered. Residues 23–244 (PTRFHQVHGA…STKSVRLVQL (222 aa)) form the NHR domain. The SOCS box domain occupies 250-285 (SLQTLCRLVIHKRVVHRLAIDVLHLPKGLKDFCKYE).

Probable component the ECS(NEURL2) E3 ubiquitin-protein ligase complex consisting of ELOB/Elongin B, ELOC/Elongin C, CUL5, RBX1 and NEURL2. Interacts with CTNNB1. In terms of tissue distribution, expressed specifically in skeletal and cardiac muscles.

Its subcellular location is the cytoplasm. It functions in the pathway protein modification; protein ubiquitination. Functionally, plays an important role in the process of myofiber differentiation and maturation. Probable substrate-recognition component of a SCF-like ECS (Elongin BC-CUL2/5-SOCS-box protein) E3 ubiquitin-protein ligase complex, which mediates the ubiquitination of proteins. Probably contributes to catalysis through recognition and positioning of the substrate and the ubiquitin-conjugating enzyme. During myogenesis, controls the ubiquitination and degradation of the specific pool of CTNNB1/beta-catenin located at the sarcolemma. The chain is Neuralized-like protein 2 (Neurl2) from Mus musculus (Mouse).